The chain runs to 402 residues: Zinc finger CCHC domain-containing protein 12 (402 aa).

Positions 1 to 20 are disordered; sequence MASILSRLGSSRGQNSPLPP. The segment at 346–363 adopts a CCHC-type zinc-finger fold; the sequence is IHCSHCGEEGHSKETCDN. Residues 383 to 402 form a disordered region; it reads HAEERARGAPGEPIGLSEPQ.

This sequence belongs to the ZCCHC12 family. As to quaternary structure, interacts with SMAD1 and CREB-binding protein (CBP). Forms a protein-DNA complex through its association with SMAD1. In terms of tissue distribution, in embryonic brains expression is restricted to the ventral region of the forebrain, including the septum, amygdala, caudal putamen, and in the basal-forebrain cholinergic neurons. In adults, expressed in the brain, and at low levels in the testis.

Its function is as follows. Transcriptional coactivator in the bone morphogenetic protein (BMP)-signaling pathway. It positively modulates BMP signaling by interacting with SMAD1 and associating with CBP in the transcription complex. It contributes to the BMP-induced enhancement of cholinergic-neuron-specific gene expression. In Mus musculus (Mouse), this protein is Zinc finger CCHC domain-containing protein 12 (Zcchc12).